Reading from the N-terminus, the 471-residue chain is Light-independent protochlorophyllide reductase subunit N (471 aa).

Residues C22, C47, and C107 each contribute to the [4Fe-4S] cluster site.

The protein belongs to the BchN/ChlN family. In terms of assembly, protochlorophyllide reductase is composed of three subunits; ChlL, ChlN and ChlB. Forms a heterotetramer of two ChlB and two ChlN subunits. [4Fe-4S] cluster serves as cofactor.

It is found in the plastid. Its subcellular location is the chloroplast. The enzyme catalyses chlorophyllide a + oxidized 2[4Fe-4S]-[ferredoxin] + 2 ADP + 2 phosphate = protochlorophyllide a + reduced 2[4Fe-4S]-[ferredoxin] + 2 ATP + 2 H2O. It functions in the pathway porphyrin-containing compound metabolism; chlorophyll biosynthesis (light-independent). Functionally, component of the dark-operative protochlorophyllide reductase (DPOR) that uses Mg-ATP and reduced ferredoxin to reduce ring D of protochlorophyllide (Pchlide) to form chlorophyllide a (Chlide). This reaction is light-independent. The NB-protein (ChlN-ChlB) is the catalytic component of the complex. The protein is Light-independent protochlorophyllide reductase subunit N of Anthoceros angustus (Hornwort).